Reading from the N-terminus, the 91-residue chain is Uteroglobin (91 aa).

An N-terminal signal peptide occupies residues 1–21 (MKLAITITLAILALCCSPASA).

This sequence belongs to the secretoglobin family. In terms of assembly, antiparallel homodimer; disulfide-linked. Interaction with LMBR1L is controversial. As to expression, club cells (nonciliated cells of the surface epithelium of the pulmonary airways). Expressed in lung, uterus, and prostate.

It is found in the secreted. In terms of biological role, binds phosphatidylcholine, phosphatidylinositol, polychlorinated biphenyls (PCB) and weakly progesterone, potent inhibitor of phospholipase A2. The protein is Uteroglobin (SCGB1A1) of Equus caballus (Horse).